A 228-amino-acid polypeptide reads, in one-letter code: PKHD-type hydroxylase Rmet_0838 (228 aa).

In terms of domain architecture, Fe2OG dioxygenase spans 78 to 179 (RVLPPMFNRY…RWASFFWAQS (102 aa)). 3 residues coordinate Fe cation: histidine 96, aspartate 98, and histidine 160. Arginine 170 is a 2-oxoglutarate binding site.

Requires Fe(2+) as cofactor. L-ascorbate is required as a cofactor.

The protein is PKHD-type hydroxylase Rmet_0838 of Cupriavidus metallidurans (strain ATCC 43123 / DSM 2839 / NBRC 102507 / CH34) (Ralstonia metallidurans).